The following is a 241-amino-acid chain: Large ribosomal subunit protein uL3 (241 aa).

Disordered stretches follow at residues 140–168 and 216–241; these read SHRSIGSTGGRQDPGKTFKNKKMPGHMGD and APKPGAFKLNGSEAAPAAEAVNEEGA. Position 151 is an N5-methylglutamine (glutamine 151).

The protein belongs to the universal ribosomal protein uL3 family. As to quaternary structure, part of the 50S ribosomal subunit. Forms a cluster with proteins L14 and L19. Post-translationally, methylated by PrmB.

Functionally, one of the primary rRNA binding proteins, it binds directly near the 3'-end of the 23S rRNA, where it nucleates assembly of the 50S subunit. This Xanthobacter autotrophicus (strain ATCC BAA-1158 / Py2) protein is Large ribosomal subunit protein uL3.